Reading from the N-terminus, the 432-residue chain is Gamma-glutamyl phosphate reductase (432 aa).

Belongs to the gamma-glutamyl phosphate reductase family.

The protein localises to the cytoplasm. It catalyses the reaction L-glutamate 5-semialdehyde + phosphate + NADP(+) = L-glutamyl 5-phosphate + NADPH + H(+). It functions in the pathway amino-acid biosynthesis; L-proline biosynthesis; L-glutamate 5-semialdehyde from L-glutamate: step 2/2. Its function is as follows. Catalyzes the NADPH-dependent reduction of L-glutamate 5-phosphate into L-glutamate 5-semialdehyde and phosphate. The product spontaneously undergoes cyclization to form 1-pyrroline-5-carboxylate. The sequence is that of Gamma-glutamyl phosphate reductase from Brachyspira hyodysenteriae (strain ATCC 49526 / WA1).